A 93-amino-acid polypeptide reads, in one-letter code: DNA-directed RNA polymerase subunit omega (93 aa).

The protein belongs to the RNA polymerase subunit omega family. The RNAP catalytic core consists of 2 alpha, 1 beta, 1 beta' and 1 omega subunit. When a sigma factor is associated with the core the holoenzyme is formed, which can initiate transcription.

The catalysed reaction is RNA(n) + a ribonucleoside 5'-triphosphate = RNA(n+1) + diphosphate. Promotes RNA polymerase assembly. Latches the N- and C-terminal regions of the beta' subunit thereby facilitating its interaction with the beta and alpha subunits. In Corynebacterium urealyticum (strain ATCC 43042 / DSM 7109), this protein is DNA-directed RNA polymerase subunit omega.